Consider the following 363-residue polypeptide: G-protein coupled receptor 4 (363 aa).

Topologically, residues 1–8 (MGNGTWEG) are extracellular. Residue Asn3 is glycosylated (N-linked (GlcNAc...) asparagine). A helical transmembrane segment spans residues 9-45 (CHVDSRVDHLFPPSLYIFVIGVGLPTNCLALWAAYRQ). Intrachain disulfides connect Cys9/Cys258 and Cys90/Cys168. Topologically, residues 46–49 (VRQR) are cytoplasmic. Residues 50 to 80 (NELGVYLMNLSIADLLYICTLPLWVDYFLHH) traverse the membrane as a helical segment. Over 81–85 (DNWIH) the chain is Extracellular. A helical membrane pass occupies residues 86-121 (GPGSCKLFGFIFYTNIYISIAFLCCISVDRYLAVAH). Over 122–129 (PLRFARLR) the chain is Cytoplasmic. The helical transmembrane segment at 130–156 (RVKTAVAVSSVVWATELGANSVPLFHD) threads the bilayer. At 157 to 172 (ELFRDRYNHTFCFEKF) the chain is on the extracellular side. An extracellular loop 2 (ECL2) region spans residues 157 to 172 (ELFRDRYNHTFCFEKF). N-linked (GlcNAc...) asparagine glycosylation occurs at Asn164. A helical transmembrane segment spans residues 173–210 (PMEGWVAWMNLYRVFVGFLFPWALMLLSYRGILRAVRG). Residues 211 to 214 (SVST) lie on the Cytoplasmic side of the membrane. The chain crosses the membrane as a helical span at residues 215–250 (ERQEKAKIKRLALSLIAIVLVCFAPYHVLLLSRSAV). Topologically, residues 251 to 260 (YLGHPWDCGF) are extracellular. A helical membrane pass occupies residues 261 to 289 (EERVFSAYHSSLAFTSLNCVADPILYCLV). Topologically, residues 290–363 (NEGARSDVAK…QLKMLPPPAP (74 aa)) are cytoplasmic. Positions 344 to 363 (ASPPSQGDQVQLKMLPPPAP) are disordered.

The protein belongs to the G-protein coupled receptor 1 family.

It localises to the cell membrane. Activated by a network of residues that connects an extracellular-facing cavity to Glu-145, a conserved charged residue buried in the transmembrane core of the receptor. Protonation likely drives conformational changes in extracellular loop 2 (ECL2), which stabilizes movement of transmembrane 3 (TM3) and a series of rearrangements that connect the extracellular-facing cavity to Glu-145, a residue only conserved in proton-sensing G-protein coupled receptors. Proton-sensing G-protein coupled receptor activated by extracellular pH, which is required to monitor pH changes and generate adaptive reactions. Activated by an optimal pH of 6.8-7.2. Ligand binding causes a conformation change that triggers signaling via guanine nucleotide-binding proteins (G proteins) and modulates the activity of downstream effectors, such as adenylate cyclase. GPR4 is mainly coupled to G(s) G proteins and mediates activation of adenylate cyclase activity. May also couple with G(q) and G(12)/G(13) G proteins. Acts as a key regulator of respiratory sensitivity to CO2/H(+) in brain retrotrapezoid nucleus neurons: acts by mediating detection of protons generated by the formation of carbonic acid in the blood, an important mechanism to impulse to breathe. Also acts as a regulator of acid secretion in the kidney collecting duct by maintaining acid-base homeostasis in the kidney. Acidosis-induced GPR4 activation increases paracellular gap formation and permeability of vascular endothelial cells, possibly through the G(12)/G(13)/Rho GTPase signaling pathway. The chain is G-protein coupled receptor 4 (GPR4) from Sus scrofa (Pig).